A 323-amino-acid chain; its full sequence is Ribosomal RNA small subunit methyltransferase H (323 aa).

Residues alanine 44 to histidine 46, aspartate 64, tyrosine 91, aspartate 112, and glutamine 119 each bind S-adenosyl-L-methionine.

This sequence belongs to the methyltransferase superfamily. RsmH family.

Its subcellular location is the cytoplasm. The catalysed reaction is cytidine(1402) in 16S rRNA + S-adenosyl-L-methionine = N(4)-methylcytidine(1402) in 16S rRNA + S-adenosyl-L-homocysteine + H(+). In terms of biological role, specifically methylates the N4 position of cytidine in position 1402 (C1402) of 16S rRNA. The chain is Ribosomal RNA small subunit methyltransferase H from Nitratidesulfovibrio vulgaris (strain ATCC 29579 / DSM 644 / CCUG 34227 / NCIMB 8303 / VKM B-1760 / Hildenborough) (Desulfovibrio vulgaris).